We begin with the raw amino-acid sequence, 179 residues long: MYEYLDRRYALALYEVAEENNKVDEYLRDLKEVVNIIKNSEDICKILKHPEISTSRKKEIFTEIFKDKVDDKILSFLLVLIEKERILYLEEKLKEMEKIYLEKNNMILANVKTVIPLLKEEREELIEKLGNKYNKKIILEEEIDKSIIGGVYVRVGDDVLDGTLSTRLKDIKKMMLKRE.

It belongs to the ATPase delta chain family. In terms of assembly, F-type ATPases have 2 components, F(1) - the catalytic core - and F(0) - the membrane proton channel. F(1) has five subunits: alpha(3), beta(3), gamma(1), delta(1), epsilon(1). F(0) has three main subunits: a(1), b(2) and c(10-14). The alpha and beta chains form an alternating ring which encloses part of the gamma chain. F(1) is attached to F(0) by a central stalk formed by the gamma and epsilon chains, while a peripheral stalk is formed by the delta and b chains.

It localises to the cell membrane. F(1)F(0) ATP synthase produces ATP from ADP in the presence of a proton or sodium gradient. F-type ATPases consist of two structural domains, F(1) containing the extramembraneous catalytic core and F(0) containing the membrane proton channel, linked together by a central stalk and a peripheral stalk. During catalysis, ATP synthesis in the catalytic domain of F(1) is coupled via a rotary mechanism of the central stalk subunits to proton translocation. Its function is as follows. This protein is part of the stalk that links CF(0) to CF(1). It either transmits conformational changes from CF(0) to CF(1) or is implicated in proton conduction. The chain is ATP synthase subunit delta from Clostridium botulinum (strain Loch Maree / Type A3).